Here is a 69-residue protein sequence, read N- to C-terminus: Sperm protamine P1 (69 aa).

Basic residues-rich tracts occupy residues methionine 1 to glycine 30 and lysine 37 to asparagine 69. The disordered stretch occupies residues methionine 1–asparagine 69.

It belongs to the protamine P1 family. Testis.

It is found in the nucleus. The protein localises to the chromosome. In terms of biological role, protamines substitute for histones in the chromatin of sperm during the haploid phase of spermatogenesis. They compact sperm DNA into a highly condensed, stable and inactive complex. The sequence is that of Sperm protamine P1 (PRM1) from Tachyglossus aculeatus aculeatus (Southeast Australian short-beaked echidna).